The primary structure comprises 337 residues: Hsp90 co-chaperone Cdc37-like 1 (337 aa).

Pro residues predominate over residues 1-11; that stretch reads MEQPWPPPGPW. A disordered region spans residues 1 to 42; it reads MEQPWPPPGPWSLPRAEGEAEEENDLDVFPSSPRCPQLPGGS. The segment at 2-171 is self-association; the sequence is EQPWPPPGPW…YEQKIRHFGM (170 aa). Serine 32 and serine 88 each carry phosphoserine. Positions 85–122 form a coiled coil; sequence NSESLDQEHAKAQIAVSELRQREEEWRQKEEALVQREK. The tract at residues 147–277 is self-association and interaction with Hsp90; the sequence is KDTEDEDKSE…SRVRLYSQSQ (131 aa). The interval 267-337 is interaction with Hsp70; sequence KSRVRLYSQS…DDEPKMMDTV (71 aa). Positions 278–337 are required for interaction with STIP1; the sequence is SFQPMTVQNHVPHSGVGSIGLLESLPQNPDYLQYSINTALCSLNSVVHKEDDEPKMMDTV.

Belongs to the CDC37 family. As to quaternary structure, self-associates. Forms complexes with Hsp70 and Hsp90. Interacts with CDC37, FKBP4, PPID and STIP1.

The protein resides in the cytoplasm. Co-chaperone that binds to numerous proteins and promotes their interaction with Hsp70 and Hsp90. This Pongo abelii (Sumatran orangutan) protein is Hsp90 co-chaperone Cdc37-like 1 (CDC37L1).